A 409-amino-acid chain; its full sequence is Multifunctional CCA protein (409 aa).

Residues Gly8 and Arg11 each coordinate ATP. The CTP site is built by Gly8 and Arg11. Residues Asp21 and Asp23 each coordinate Mg(2+). ATP-binding residues include Arg91, Arg137, and Arg140. CTP is bound by residues Arg91, Arg137, and Arg140. The region spanning 228–329 (TGVHVLSVLE…LELLQSFDVY (102 aa)) is the HD domain.

This sequence belongs to the tRNA nucleotidyltransferase/poly(A) polymerase family. Bacterial CCA-adding enzyme type 1 subfamily. In terms of assembly, monomer. Can also form homodimers and oligomers. Mg(2+) serves as cofactor. Ni(2+) is required as a cofactor.

It catalyses the reaction a tRNA precursor + 2 CTP + ATP = a tRNA with a 3' CCA end + 3 diphosphate. It carries out the reaction a tRNA with a 3' CCA end + 2 CTP + ATP = a tRNA with a 3' CCACCA end + 3 diphosphate. Its function is as follows. Catalyzes the addition and repair of the essential 3'-terminal CCA sequence in tRNAs without using a nucleic acid template. Adds these three nucleotides in the order of C, C, and A to the tRNA nucleotide-73, using CTP and ATP as substrates and producing inorganic pyrophosphate. tRNA 3'-terminal CCA addition is required both for tRNA processing and repair. Also involved in tRNA surveillance by mediating tandem CCA addition to generate a CCACCA at the 3' terminus of unstable tRNAs. While stable tRNAs receive only 3'-terminal CCA, unstable tRNAs are marked with CCACCA and rapidly degraded. This Pseudomonas savastanoi pv. phaseolicola (strain 1448A / Race 6) (Pseudomonas syringae pv. phaseolicola (strain 1448A / Race 6)) protein is Multifunctional CCA protein.